A 378-amino-acid polypeptide reads, in one-letter code: Queuine tRNA-ribosyltransferase (378 aa).

The active-site Proton acceptor is D91. Residues D91–F95, D145, Q189, and G216 contribute to the substrate site. The tract at residues G247–D253 is RNA binding. D266 acts as the Nucleophile in catalysis. The interval T271 to R275 is RNA binding; important for wobble base 34 recognition. Residues C304, C306, C309, and H335 each coordinate Zn(2+).

This sequence belongs to the queuine tRNA-ribosyltransferase family. As to quaternary structure, homodimer. Within each dimer, one monomer is responsible for RNA recognition and catalysis, while the other monomer binds to the replacement base PreQ1. Zn(2+) serves as cofactor.

The enzyme catalyses 7-aminomethyl-7-carbaguanine + guanosine(34) in tRNA = 7-aminomethyl-7-carbaguanosine(34) in tRNA + guanine. The protein operates within tRNA modification; tRNA-queuosine biosynthesis. Its function is as follows. Catalyzes the base-exchange of a guanine (G) residue with the queuine precursor 7-aminomethyl-7-deazaguanine (PreQ1) at position 34 (anticodon wobble position) in tRNAs with GU(N) anticodons (tRNA-Asp, -Asn, -His and -Tyr). Catalysis occurs through a double-displacement mechanism. The nucleophile active site attacks the C1' of nucleotide 34 to detach the guanine base from the RNA, forming a covalent enzyme-RNA intermediate. The proton acceptor active site deprotonates the incoming PreQ1, allowing a nucleophilic attack on the C1' of the ribose to form the product. After dissociation, two additional enzymatic reactions on the tRNA convert PreQ1 to queuine (Q), resulting in the hypermodified nucleoside queuosine (7-(((4,5-cis-dihydroxy-2-cyclopenten-1-yl)amino)methyl)-7-deazaguanosine). This is Queuine tRNA-ribosyltransferase from Vibrio vulnificus (strain CMCP6).